A 338-amino-acid chain; its full sequence is DNA-directed RNA polymerase subunit alpha (338 aa).

Positions 1–234 (MIQKNWQELI…DQLNVFVNFE (234 aa)) are alpha N-terminal domain (alpha-NTD). The segment at 250–338 (FNPALLKKVD…ELAKRFEEHY (89 aa)) is alpha C-terminal domain (alpha-CTD).

The protein belongs to the RNA polymerase alpha chain family. As to quaternary structure, homodimer. The RNAP catalytic core consists of 2 alpha, 1 beta, 1 beta' and 1 omega subunit. When a sigma factor is associated with the core the holoenzyme is formed, which can initiate transcription.

It carries out the reaction RNA(n) + a ribonucleoside 5'-triphosphate = RNA(n+1) + diphosphate. Its function is as follows. DNA-dependent RNA polymerase catalyzes the transcription of DNA into RNA using the four ribonucleoside triphosphates as substrates. This Beijerinckia indica subsp. indica (strain ATCC 9039 / DSM 1715 / NCIMB 8712) protein is DNA-directed RNA polymerase subunit alpha.